The following is a 476-amino-acid chain: Protein PAL OF QUIRKY (476 aa).

An N-terminal signal peptide occupies residues 1–14 (MTTVSSAFATVAEG). Residues 204 to 256 (TRRTNSGTSGSGDGNGGICGQESMMLETNSSFGSTSSSVSSSNLPPIKSSGED) are disordered. Over residues 212–222 (SGSGDGNGGIC) the composition is skewed to gly residues. The segment covering 233 to 252 (SSFGSTSSSVSSSNLPPIKS) has biased composition (low complexity).

In terms of assembly, homodimer. Interacts with QKY and SUB/SCM at the plasma membrane. In terms of tissue distribution, observed in seedlings, roots, shoots, leaves, stems, inflorescence and flowers.

Its subcellular location is the cell membrane. The protein resides in the endomembrane system. Functionally, collaboratively with SUB and QKY, regulates cell growth anisotropy during gynoecium development, thus linking together cell-cell communication and cellular growth. This Arabidopsis thaliana (Mouse-ear cress) protein is Protein PAL OF QUIRKY.